The primary structure comprises 400 residues: Bifunctional enzyme IspD/IspF (400 aa).

The 2-C-methyl-D-erythritol 4-phosphate cytidylyltransferase stretch occupies residues 1–244 (MSHRVLGTER…LLKERDKMDI (244 aa)). Residues 245–400 (RTGNGYDVHR…ALATVTLVRT (156 aa)) form a 2-C-methyl-D-erythritol 2,4-cyclodiphosphate synthase region. The a divalent metal cation site is built by aspartate 251 and histidine 253. 4-CDP-2-C-methyl-D-erythritol 2-phosphate contacts are provided by residues 251 to 253 (DVH) and 277 to 278 (HS). Histidine 285 contacts a divalent metal cation. 4-CDP-2-C-methyl-D-erythritol 2-phosphate contacts are provided by residues 299–301 (DIG), 375–378 (TTSE), phenylalanine 382, and arginine 385.

In the N-terminal section; belongs to the IspD/TarI cytidylyltransferase family. IspD subfamily. The protein in the C-terminal section; belongs to the IspF family. A divalent metal cation serves as cofactor.

The enzyme catalyses 2-C-methyl-D-erythritol 4-phosphate + CTP + H(+) = 4-CDP-2-C-methyl-D-erythritol + diphosphate. The catalysed reaction is 4-CDP-2-C-methyl-D-erythritol 2-phosphate = 2-C-methyl-D-erythritol 2,4-cyclic diphosphate + CMP. It participates in isoprenoid biosynthesis; isopentenyl diphosphate biosynthesis via DXP pathway; isopentenyl diphosphate from 1-deoxy-D-xylulose 5-phosphate: step 2/6. It functions in the pathway isoprenoid biosynthesis; isopentenyl diphosphate biosynthesis via DXP pathway; isopentenyl diphosphate from 1-deoxy-D-xylulose 5-phosphate: step 4/6. Functionally, bifunctional enzyme that catalyzes the formation of 4-diphosphocytidyl-2-C-methyl-D-erythritol from CTP and 2-C-methyl-D-erythritol 4-phosphate (MEP) (IspD), and catalyzes the conversion of 4-diphosphocytidyl-2-C-methyl-D-erythritol 2-phosphate (CDP-ME2P) to 2-C-methyl-D-erythritol 2,4-cyclodiphosphate (ME-CPP) with a corresponding release of cytidine 5-monophosphate (CMP) (IspF). The protein is Bifunctional enzyme IspD/IspF of Dinoroseobacter shibae (strain DSM 16493 / NCIMB 14021 / DFL 12).